A 162-amino-acid polypeptide reads, in one-letter code: Circumsporozoite protein-related antigen (162 aa).

A signal peptide spans 1–16 (MKILSVFFLALFFIIF). Disordered regions lie at residues 24–44 (KTNK…KGSG) and 109–162 (PFKI…GPEH). Over residues 114–130 (SSDPADNANPDADSESN) the composition is skewed to low complexity. The segment covering 137-162 (PQVTAQDVTPEQPQGDDNNLVSGPEH) has biased composition (polar residues).

This chain is Circumsporozoite protein-related antigen, found in Plasmodium falciparum.